Here is a 201-residue protein sequence, read N- to C-terminus: NADH-quinone oxidoreductase subunit C 1 (201 aa).

This sequence belongs to the complex I 30 kDa subunit family. NDH-1 is composed of 14 different subunits. Subunits NuoB, C, D, E, F, and G constitute the peripheral sector of the complex.

It is found in the cell inner membrane. The catalysed reaction is a quinone + NADH + 5 H(+)(in) = a quinol + NAD(+) + 4 H(+)(out). Functionally, NDH-1 shuttles electrons from NADH, via FMN and iron-sulfur (Fe-S) centers, to quinones in the respiratory chain. The immediate electron acceptor for the enzyme in this species is believed to be ubiquinone. Couples the redox reaction to proton translocation (for every two electrons transferred, four hydrogen ions are translocated across the cytoplasmic membrane), and thus conserves the redox energy in a proton gradient. This chain is NADH-quinone oxidoreductase subunit C 1, found in Rhizobium meliloti (strain 1021) (Ensifer meliloti).